The sequence spans 184 residues: MAEPQPASSGLTDETAFSCCSDPDPSTKDFLLQQTMLRIKDPKKSLDFYTRVLGLTLLQKLDFPAMKFSLYFLAYEDKNDIPKDKSEKTAWTFSRKATLELTHNWGTEDDETQSYHNGNSDPRGFGHIGIAVPDVYSACKRFEELGVKFVKKPDDGKMKGLAFIQDPDGYWIEILNPNKIATII.

An N-acetylalanine modification is found at Ala-2. Residues Cys-19 and Cys-20 are joined by a disulfide bond. Positions 31 to 177 constitute a VOC domain; the sequence is LLQQTMLRIK…DGYWIEILNP (147 aa). The substrate site is built by Gln-34 and Arg-38. A Zn(2+)-binding site is contributed by Gln-34. Lys-88 carries the post-translational modification N6-succinyllysine. Residue Glu-100 coordinates Zn(2+). Asn-104 is a binding site for substrate. Residue Thr-107 is modified to Phosphothreonine. The substrate site is built by Arg-123 and His-127. Residue His-127 participates in Zn(2+) binding. Cys-139 carries the S-glutathionyl cysteine modification. N6-acetyllysine; alternate is present on Lys-148. The residue at position 148 (Lys-148) is an N6-succinyllysine; alternate. Residue 157–158 coordinates substrate; that stretch reads KM. Position 173 (Glu-173) interacts with Zn(2+). Residue Glu-173 is the Proton donor/acceptor of the active site.

This sequence belongs to the glyoxalase I family. In terms of assembly, homodimer. Zn(2+) serves as cofactor. Post-translationally, glutathionylation at Cys-139 inhibits enzyme activity. Phosphorylated at Thr-107 in the presence of CaMK2. However, this is a consensus site for phosphorylation by CK2 so phosphorylation may be mediated by CK2 rather than CaMK2. Phosphorylation is induced by TNF and suppresses the TNF-induced transcriptional activity of NF-kappa-B. In terms of processing, exists in a nitric oxide (NO)-modified form. The exact nature of the modification is unknown, but it suppresses the TNF-induced transcriptional activity of NF-kappa-B.

The catalysed reaction is (R)-S-lactoylglutathione = methylglyoxal + glutathione. The protein operates within secondary metabolite metabolism; methylglyoxal degradation; (R)-lactate from methylglyoxal: step 1/2. With respect to regulation, subject to competitive inhibition by methyl-gerfelin. In terms of biological role, catalyzes the conversion of hemimercaptal, formed from methylglyoxal and glutathione, to S-lactoylglutathione. Involved in the regulation of TNF-induced transcriptional activity of NF-kappa-B. Required for normal osteoclastogenesis. In Mus musculus (Mouse), this protein is Lactoylglutathione lyase (Glo1).